The sequence spans 84 residues: Toxin Tb1 (84 aa).

Residues 1-20 (MKGMILFISCLLLIGIVVEC) form the signal peptide. In terms of domain architecture, LCN-type CS-alpha/beta spans 21-82 (KEGYLMDHEG…VWDRATNKCG (62 aa)). Disulfide bonds link Cys-31–Cys-81, Cys-35–Cys-57, Cys-43–Cys-62, and Cys-47–Cys-64. Cys-81 is modified (cysteine amide).

Belongs to the long (4 C-C) scorpion toxin superfamily. Sodium channel inhibitor family. Beta subfamily. As to expression, expressed by the venom gland.

Its subcellular location is the secreted. Beta toxins bind voltage-independently at site-4 of sodium channels (Nav) and shift the voltage of activation toward more negative potentials thereby affecting sodium channel activation and promoting spontaneous and repetitive firing. Is lethal to mice. This chain is Toxin Tb1, found in Tityus bahiensis (Brazilian scorpion).